Here is a 395-residue protein sequence, read N- to C-terminus: Chorismate synthase (395 aa).

Arg-40 and Arg-46 together coordinate NADP(+). A disordered region spans residues 98–120 (LPREGRNAPLSRPRPGHADLTGM). Residues 134–136 (RSS), 256–257 (QA), Gly-301, 316–320 (KPIPS), and Arg-342 each bind FMN.

Belongs to the chorismate synthase family. In terms of assembly, homotetramer. It depends on FMNH2 as a cofactor.

The enzyme catalyses 5-O-(1-carboxyvinyl)-3-phosphoshikimate = chorismate + phosphate. It participates in metabolic intermediate biosynthesis; chorismate biosynthesis; chorismate from D-erythrose 4-phosphate and phosphoenolpyruvate: step 7/7. In terms of biological role, catalyzes the anti-1,4-elimination of the C-3 phosphate and the C-6 proR hydrogen from 5-enolpyruvylshikimate-3-phosphate (EPSP) to yield chorismate, which is the branch point compound that serves as the starting substrate for the three terminal pathways of aromatic amino acid biosynthesis. This reaction introduces a second double bond into the aromatic ring system. The chain is Chorismate synthase from Bifidobacterium longum subsp. infantis (strain ATCC 15697 / DSM 20088 / JCM 1222 / NCTC 11817 / S12).